A 139-amino-acid polypeptide reads, in one-letter code: Ribulose bisphosphate carboxylase small subunit (139 aa).

It belongs to the RuBisCO small chain family. As to quaternary structure, heterohexadecamer of 8 large and 8 small subunits.

It is found in the plastid. The protein resides in the chloroplast. RuBisCO catalyzes two reactions: the carboxylation of D-ribulose 1,5-bisphosphate, the primary event in carbon dioxide fixation, as well as the oxidative fragmentation of the pentose substrate in the photorespiration process. Both reactions occur simultaneously and in competition at the same active site. Although the small subunit is not catalytic it is essential for maximal activity. The protein is Ribulose bisphosphate carboxylase small subunit of Guillardia theta (Cryptophyte).